A 235-amino-acid chain; its full sequence is Pyridoxine 5'-phosphate synthase (235 aa).

Asn7 serves as a coordination point for 3-amino-2-oxopropyl phosphate. Asp9–His10 contributes to the 1-deoxy-D-xylulose 5-phosphate binding site. Arg18 lines the 3-amino-2-oxopropyl phosphate pocket. His43 functions as the Proton acceptor in the catalytic mechanism. The 1-deoxy-D-xylulose 5-phosphate site is built by Arg45 and His50. Catalysis depends on Glu70, which acts as the Proton acceptor. Thr100 contacts 1-deoxy-D-xylulose 5-phosphate. The active-site Proton donor is the His187. 3-amino-2-oxopropyl phosphate-binding positions include Gly188 and Gly209–His210.

This sequence belongs to the PNP synthase family. Homooctamer; tetramer of dimers.

It localises to the cytoplasm. The enzyme catalyses 3-amino-2-oxopropyl phosphate + 1-deoxy-D-xylulose 5-phosphate = pyridoxine 5'-phosphate + phosphate + 2 H2O + H(+). It participates in cofactor biosynthesis; pyridoxine 5'-phosphate biosynthesis; pyridoxine 5'-phosphate from D-erythrose 4-phosphate: step 5/5. Functionally, catalyzes the complicated ring closure reaction between the two acyclic compounds 1-deoxy-D-xylulose-5-phosphate (DXP) and 3-amino-2-oxopropyl phosphate (1-amino-acetone-3-phosphate or AAP) to form pyridoxine 5'-phosphate (PNP) and inorganic phosphate. This chain is Pyridoxine 5'-phosphate synthase, found in Desulfatibacillum aliphaticivorans.